Here is a 253-residue protein sequence, read N- to C-terminus: Histone-arginine methyltransferase METTL23 (253 aa).

The segment at 1–23 (MDSVRPRAPWAPPPDPASLDSPT) is disordered.

Belongs to the methyltransferase superfamily. METTL23 family. As to quaternary structure, interacts with HSPA5, HSP90B1, TUBULIN, UGGT1 and UGGT2. Interacts with TET3. Interacts with STPG4. Ubiquitously expressed.

Its subcellular location is the nucleus. It localises to the cytoplasm. It carries out the reaction L-arginyl-[protein] + 2 S-adenosyl-L-methionine = N(omega),N(omega)-dimethyl-L-arginyl-[protein] + 2 S-adenosyl-L-homocysteine + 2 H(+). Functionally, histone methyltransferase that dimethylates histone H3 at 'Arg-17', forming asymmetric dimethylarginine (H3R17me2a), leading to activate transcription via chromatin remodeling. Maternal factor involved in epigenetic chromatin reprogramming of the paternal genome in the zygote: mediates H3R17me2a, promoting histone H3.3 incorporation in the male pronucleus, leading to TET3 recruitment and subsequent DNA demethylation. The polypeptide is Histone-arginine methyltransferase METTL23 (Mus musculus (Mouse)).